The chain runs to 170 residues: F107 fimbrial protein (170 aa).

A signal peptide spans 1–21 (MKRLVFISFVALSMTAGSAMA). An intrachain disulfide couples Cys37 to Cys78.

It belongs to the fimbrial protein family.

It is found in the fimbrium. Fimbriae (also called pili), polar filaments radiating from the surface of the bacterium to a length of 0.5-1.5 micrometers and numbering 100-300 per cell, enable bacteria to colonize the epithelium of specific host organs. The sequence is that of F107 fimbrial protein (fedA) from Escherichia coli.